A 100-amino-acid polypeptide reads, in one-letter code: NADH-quinone oxidoreductase subunit K (100 aa).

The next 3 membrane-spanning stretches (helical) occupy residues threonine 4 to isoleucine 24, leucine 29 to phenylalanine 49, and isoleucine 60 to leucine 80.

This sequence belongs to the complex I subunit 4L family. NDH-1 is composed of 14 different subunits. Subunits NuoA, H, J, K, L, M, N constitute the membrane sector of the complex.

It localises to the cell membrane. It carries out the reaction a quinone + NADH + 5 H(+)(in) = a quinol + NAD(+) + 4 H(+)(out). NDH-1 shuttles electrons from NADH, via FMN and iron-sulfur (Fe-S) centers, to quinones in the respiratory chain. The immediate electron acceptor for the enzyme in this species is believed to be ubiquinone. Couples the redox reaction to proton translocation (for every two electrons transferred, four hydrogen ions are translocated across the cytoplasmic membrane), and thus conserves the redox energy in a proton gradient. The sequence is that of NADH-quinone oxidoreductase subunit K from Roseiflexus sp. (strain RS-1).